Reading from the N-terminus, the 322-residue chain is Homeobox protein DBX1-B (322 aa).

A DNA-binding region (homeobox) is located at residues 179 to 238 (GMLRRAVFSDVQRKALEKMFQKQKYISKPDRKKLATKLGLKDSQVKIWFQNRRMKWRNSK). Disordered stretches follow at residues 238-266 (KERELLSSGGCREQTLPTKMNPNPDLSDV) and 296-322 (DLHFKSPSISSKHSDFSESEDEEITVS). Over residues 312 to 322 (SESEDEEITVS) the composition is skewed to acidic residues.

This sequence belongs to the H2.0 homeobox family.

Its subcellular location is the nucleus. In Danio rerio (Zebrafish), this protein is Homeobox protein DBX1-B (dbx1b).